The chain runs to 644 residues: MFQDNPLLAQLKQQLHSQTPRAEGVVKATEKGFGFLEVDAQKSYFIPPPQMKKVMHGDRIIAVIHSEKERESAEPEELVEPFLTRFVGKVQGKNDRLAIVPDHPLLKDAIPCRAARGLNHEFKEGDWAVAEMRRHPLKGDRSFYAELTQYITFGDDHFVPWWVTLARHNLEKEAPDGVATEMLDEGLVREDLTALDFVTIDSASTEDMDDALFAKALPDDKLQLIVAIADPTAWIAEGSKLDKAAKIRAFTNYLPGFNIPMLPRELSDDLCSLRANEVRPVLACRMTLSADGTIEDNIEFFAATIESKAKLVYDQVSDWLENTGDWQPESEAIAEQVRLLAQICQRRGEWRHNHALVFKDRPDYRFILGEKGEVLDIVAEPRRIANRIVEEAMIAANICAARVLRDKLGFGIYNVHMGFDPANADALAALLKTHGLHVDAEEVLTLDGFCKLRRELDAQPTGFLDSRIRRFQSFAEISTEPGPHFGLGLEAYATWTSPIRKYGDMINHRLLKAVIKGETATRPQDEITVQMAERRRLNRMAERDVGDWLYARFLKDKAGTDTRFAAEIVDISRGGMRVRLVDNGAIAFIPAPFLHAMRDELVCSQENGTVQIKGETVYKVTDVIDVTIAEVRMETRSIIARPVA.

The 328-residue stretch at 189-516 folds into the RNB domain; that stretch reads REDLTALDFV…NHRLLKAVIK (328 aa). The 83-residue stretch at 561 to 643 folds into the S1 motif domain; it reads DTRFAAEIVD…ETRSIIARPV (83 aa).

It belongs to the RNR ribonuclease family. RNase II subfamily.

Its subcellular location is the cytoplasm. The catalysed reaction is Exonucleolytic cleavage in the 3'- to 5'-direction to yield nucleoside 5'-phosphates.. In terms of biological role, involved in mRNA degradation. Hydrolyzes single-stranded polyribonucleotides processively in the 3' to 5' direction. This chain is Exoribonuclease 2, found in Escherichia coli O8 (strain IAI1).